A 61-amino-acid polypeptide reads, in one-letter code: Photosystem II reaction center protein K (61 aa).

Positions 1 to 24 (MPNILSLTCICFNSVIYPTSFFFA) are excised as a propeptide. Residues 32-52 (IFNPIVDFMPVIPVLFFLLAF) form a helical membrane-spanning segment.

It belongs to the PsbK family. PSII is composed of 1 copy each of membrane proteins PsbA, PsbB, PsbC, PsbD, PsbE, PsbF, PsbH, PsbI, PsbJ, PsbK, PsbL, PsbM, PsbT, PsbX, PsbY, PsbZ, Psb30/Ycf12, at least 3 peripheral proteins of the oxygen-evolving complex and a large number of cofactors. It forms dimeric complexes.

The protein localises to the plastid. It is found in the chloroplast thylakoid membrane. In terms of biological role, one of the components of the core complex of photosystem II (PSII). PSII is a light-driven water:plastoquinone oxidoreductase that uses light energy to abstract electrons from H(2)O, generating O(2) and a proton gradient subsequently used for ATP formation. It consists of a core antenna complex that captures photons, and an electron transfer chain that converts photonic excitation into a charge separation. The sequence is that of Photosystem II reaction center protein K from Oryza nivara (Indian wild rice).